A 342-amino-acid polypeptide reads, in one-letter code: Periplasmic protein TorT (342 aa).

Residues 1-18 (MRVLLFLLLSLFMLPAFS) form the signal peptide.

This sequence belongs to the bacterial solute-binding protein 2 family.

Its subcellular location is the periplasm. Functionally, upon binding a putative inducer it probably interacts with TorS and allows it to play a role in the induction of the torCAD operon for trimethylamine N-oxide reductase. The chain is Periplasmic protein TorT (torT) from Escherichia coli (strain K12).